The sequence spans 293 residues: Phosphatidylcholine-sterol acyltransferase (293 aa).

The N-linked (GlcNAc...) asparagine glycan is linked to Asn26. Ser123 (nucleophile) is an active-site residue. Asn179 carries an N-linked (GlcNAc...) asparagine glycan. A disulfide bridge links Cys220 with Cys263. Catalysis depends on Asp252, which acts as the Charge relay system. The N-linked (GlcNAc...) asparagine glycan is linked to Asn280. The Charge relay system role is filled by His284.

This sequence belongs to the AB hydrolase superfamily. Lipase family.

The protein resides in the secreted. The catalysed reaction is a sterol + a 1,2-diacyl-sn-glycero-3-phosphocholine = a sterol ester + a 1-acyl-sn-glycero-3-phosphocholine. With respect to regulation, APOA1 is the most potent activator in plasma. Also activated by APOE, APOC1 and APOA4. Functionally, central enzyme in the extracellular metabolism of plasma lipoproteins. Synthesized mainly in the liver and secreted into plasma where it converts cholesterol and phosphatidylcholines (lecithins) to cholesteryl esters and lysophosphatidylcholines on the surface of high and low density lipoproteins (HDLs and LDLs). The cholesterol ester is then transported back to the liver. Has a preference for plasma 16:0-18:2 or 18:O-18:2 phosphatidylcholines. Also produced in the brain by primary astrocytes, and esterifies free cholesterol on nascent APOE-containing lipoproteins secreted from glia and influences cerebral spinal fluid (CSF) APOE- and APOA1 levels. Together with APOE and the cholesterol transporter ABCA1, plays a key role in the maturation of glial-derived, nascent lipoproteins. Required for remodeling high-density lipoprotein particles into their spherical forms. In Gerbilliscus gambianus (Gambian gerbil), this protein is Phosphatidylcholine-sterol acyltransferase (LCAT).